Here is an 89-residue protein sequence, read N- to C-terminus: Barrier-to-autointegration factor (89 aa).

At Met-1 the chain carries N-acetylmethionine. Thr-2 carries the post-translational modification N-acetylthreonine; in Barrier-to-autointegration factor, N-terminally processed. Phosphothreonine; by VRK1 and VRK2 is present on residues Thr-2 and Thr-3. Residue Ser-4 is modified to Phosphoserine; by VRK1 and VRK2. The 16-residue stretch at 20–35 folds into the HhH domain; the sequence is VGSLAGIGDVLSKRLE.

Belongs to the BAF family. As to quaternary structure, homodimer. Heterodimerizes with BANF2. Interacts with ANKLE2/LEM4, leading to decreased phosphorylation by VRK1 and promoting dephosphorylation by protein phosphatase 2A (PP2A). Binds non-specifically to double-stranded DNA, and is found as a hexamer or dodecamer upon DNA binding. Binds to LEM domain-containing nuclear proteins such as LEMD3/MAN1, TMPO/LAP2 and EMD (emerin). Interacts with ANKLE1 (via LEM domain); the interaction may favor BANF1 dimerization. Interacts with CRX and LMNA (lamin-A). Binds linker histone H1.1 and core histones H3. Interacts with LEMD2 (via LEM domain). Interacts with PARP1; interaction takes place in response to oxidative DNA damage. Ser-4 is the major site of phosphorylation as compared to Thr-2 and Thr-3. Phosphorylation on Thr-2; Thr-3 and Ser-4 disrupts its ability to bind DNA and reduces its ability to bind LEM domain-containing proteins. Non phosphorylated BAF seems to enhance binding between EMD and LMNA. Dephosphorylated by protein phosphatase 2A (PP2A) following interaction with ANKLE2/LEM4 during mitotic exit, leading to mitotic nuclear envelope reassembly.

The protein localises to the nucleus. Its subcellular location is the chromosome. It localises to the nucleus envelope. It is found in the cytoplasm. Functionally, non-specific DNA-binding protein that plays key roles in mitotic nuclear reassembly, chromatin organization, DNA damage response, gene expression and intrinsic immunity against foreign DNA. Contains two non-specific double-stranded DNA (dsDNA)-binding sites which promote DNA cross-bridging. Plays a key role in nuclear membrane reformation at the end of mitosis by driving formation of a single nucleus in a spindle-independent manner. Transiently cross-bridges anaphase chromosomes via its ability to bridge distant DNA sites, leading to the formation of a dense chromatin network at the chromosome ensemble surface that limits membranes to the surface. Also acts as a negative regulator of innate immune activation by restricting CGAS activity toward self-DNA upon acute loss of nuclear membrane integrity. Outcompetes CGAS for DNA-binding, thereby preventing CGAS activation and subsequent damaging autoinflammatory responses. Also involved in DNA damage response: interacts with PARP1 in response to oxidative stress, thereby inhibiting the ADP-ribosyltransferase activity of PARP1. Involved in the recognition of exogenous dsDNA in the cytosol: associates with exogenous dsDNA immediately after its appearance in the cytosol at endosome breakdown and is required to avoid autophagy. The chain is Barrier-to-autointegration factor from Mus musculus (Mouse).